A 707-amino-acid polypeptide reads, in one-letter code: MGKSSKKSAVEVAPTSVSVSEGKSGKKGKRNAEDEIEKAVSAKKQKTVREKVVPSKEEAKKVKKQPPPKKVESSSSEEDSSESEEEVKAQPKKTVQPKKAAQPAKEESSDDSSDDSSSDDEPAKKPVARPNKAALSTNSSSSDDSSDESLSDDEPVKKPAAPLKKPVALATNGSKKVETDSSSSDSSSDEESDEDDKKTAAPVKKPSVAAIQKKTQESDSSDSDSDSESDEDVPTKAPAVAKKKEESSESSDSESDSDSDDEAAAVKKEEESSDSSDSDSESESDSDEPAKPTIPAKRPLTKDTKKGQSKDESEDSSDESSEESGDEPPQKKIKDSTTSGTTKPSPKATKKEISSDDESDEDDSSDESSDEDVKQKQTQAKKQAPVAQESSSSDESSEEDSDMESDEPAKTPQKKETAVSVGSNKSATKPGQEEPKTPASNQNQATGSKTLFVGNLPYNVEQEQVKQFFQEAGEVVDIRFSTFEDGNFRGFGHVEFATAEAAKKALELAGHDLMGRPVRLDLARERGAYTPGSGRDNSSFKKPAQSSGNTIFIKGFDTSLDIHQIRNSLEEHFGSCGEITRVSIPKDYETGASKGMAYMDFADNGSLSKAYELNGSDLGGYSLYVDEARPRPDNNREGGFSGGRDFNSSGRGGRRGGRGDGSRGRGDRGRGRGFGRGDRGHGGRGTPFKQSAGTPSAGKKTTFGDDD.

The segment at 1–446 (MGKSSKKSAV…TPASNQNQAT (446 aa)) is disordered. 2 stretches are compositionally biased toward basic and acidic residues: residues 30–40 (RNAEDEIEKAV) and 47–60 (TVREKVVPSKEEAK). 3 stretches are compositionally biased toward acidic residues: residues 75–85 (SSEEDSSESEE), 108–120 (SSDDSSDDSSSDD), and 144–153 (DSSDESLSDD). Residues 158-170 (KPAAPLKKPVALA) show a composition bias toward low complexity. Composition is skewed to acidic residues over residues 219–232 (DSSDSDSDSESDED), 248–263 (SESSDSESDSDSDDEA), and 271–287 (ESSDSSDSDSESESDSD). Residues 300–311 (LTKDTKKGQSKD) show a composition bias toward basic and acidic residues. Acidic residues predominate over residues 312 to 326 (ESEDSSDESSEESGD). Residues 336-347 (STTSGTTKPSPK) are compositionally biased toward low complexity. Residues 355-370 (SDDESDEDDSSDESSD) show a composition bias toward acidic residues. The segment covering 376-394 (KQTQAKKQAPVAQESSSSD) has biased composition (low complexity). The span at 395-406 (ESSEEDSDMESD) shows a compositional bias: acidic residues. Positions 407–417 (EPAKTPQKKET) are enriched in basic and acidic residues. Residues 420-429 (SVGSNKSATK) are compositionally biased toward polar residues. The RRM 1 domain occupies 449 to 525 (KTLFVGNLPY…RPVRLDLARE (77 aa)). 2 disordered regions span residues 527-546 (GAYTPGSGRDNSSFKKPAQS) and 629-707 (RPRP…GDDD). Residues 549 to 630 (NTIFIKGFDT…YSLYVDEARP (82 aa)) enclose the RRM 2 domain. Residues 657-681 (GRGDGSRGRGDRGRGRGFGRGDRGH) show a composition bias toward basic and acidic residues.

The protein localises to the nucleus. It is found in the nucleolus. Its function is as follows. Involved in pre-rRNA processing and ribosome assembly. In Oryza sativa subsp. japonica (Rice), this protein is Nucleolin 2.